A 127-amino-acid polypeptide reads, in one-letter code: uncharacterized protein (127 aa).

2 disordered regions span residues 1–22 and 53–106; these read MLPAGCWNDTSRDGPGFRKMKG and LVGK…PGPK. Residues 76–95 are compositionally biased toward basic and acidic residues; it reads PNGEAHAEQARRKISVEEKQ.

The protein resides in the mitochondrion. This is an uncharacterized protein from Arabidopsis thaliana (Mouse-ear cress).